Reading from the N-terminus, the 99-residue chain is MPRSLKKGPFIDIKLEKRILDMNSKGEKKVIKTWSRSSMISPDFVGHTVAVHNGKNHVPVYVGDNMVGHKLGEFAPTRSFRGHAGGGKAEKGGSAPRKK.

The disordered stretch occupies residues 76-99; sequence PTRSFRGHAGGGKAEKGGSAPRKK.

It belongs to the universal ribosomal protein uS19 family.

In terms of biological role, protein S19 forms a complex with S13 that binds strongly to the 16S ribosomal RNA. This is Small ribosomal subunit protein uS19 from Pelodictyon phaeoclathratiforme (strain DSM 5477 / BU-1).